The chain runs to 861 residues: Leucine--tRNA ligase (861 aa).

Positions 42-52 (PYPSGKLHMGH) match the 'HIGH' region motif. The 'KMSKS' region signature appears at 619-623 (KMSKS). Lysine 622 provides a ligand contact to ATP.

Belongs to the class-I aminoacyl-tRNA synthetase family.

Its subcellular location is the cytoplasm. The enzyme catalyses tRNA(Leu) + L-leucine + ATP = L-leucyl-tRNA(Leu) + AMP + diphosphate. In Actinobacillus pleuropneumoniae serotype 5b (strain L20), this protein is Leucine--tRNA ligase.